The primary structure comprises 181 residues: Small ribosomal subunit protein uS4 (181 aa).

In terms of domain architecture, S4 RNA-binding spans 104–166 (RRLQTIVYKK…VTSSFKSRPP (63 aa)).

The protein belongs to the universal ribosomal protein uS4 family. As to quaternary structure, part of the 30S ribosomal subunit. Contacts protein S5. The interaction surface between S4 and S5 is involved in control of translational fidelity.

One of the primary rRNA binding proteins, it binds directly to 16S rRNA where it nucleates assembly of the body of the 30S subunit. Its function is as follows. With S5 and S12 plays an important role in translational accuracy. The polypeptide is Small ribosomal subunit protein uS4 (Saccharolobus islandicus (strain Y.N.15.51 / Yellowstone #2) (Sulfolobus islandicus)).